A 426-amino-acid chain; its full sequence is UPF0597 protein CLI_1810 (426 aa).

It belongs to the UPF0597 family.

This chain is UPF0597 protein CLI_1810, found in Clostridium botulinum (strain Langeland / NCTC 10281 / Type F).